The following is a 386-amino-acid chain: Probable zinc transporter zrg17 (386 aa).

The next 6 membrane-spanning stretches (helical) occupy residues 102–122 (ILFFLVAVGVLLSGDATILLT), 128–148 (IVEGVLIIINVWRETLDSFLV), 163–183 (MELLVDFSFSILLIFLGMNLL), 208–228 (VHIHLTISLFASAIISGFALL), 243–263 (FFHGLTLVPSLILVLLLSLGY), and 268–288 (FLSHLLSLTIAVTALVNGFSI).

This sequence belongs to the cation diffusion facilitator (CDF) transporter (TC 2.A.4) family. SLC30A subfamily. In terms of assembly, interacts with cis4.

Its subcellular location is the cytoplasm. It localises to the nucleus membrane. Functionally, probable transporter involved in the regulation of zinc homeostasis. The chain is Probable zinc transporter zrg17 (zrg17) from Schizosaccharomyces pombe (strain 972 / ATCC 24843) (Fission yeast).